The sequence spans 179 residues: Large ribosomal subunit protein uL5 (179 aa).

The protein belongs to the universal ribosomal protein uL5 family. Part of the 50S ribosomal subunit; part of the 5S rRNA/L5/L18/L25 subcomplex. Contacts the 5S rRNA and the P site tRNA. Forms a bridge to the 30S subunit in the 70S ribosome.

Its function is as follows. This is one of the proteins that bind and probably mediate the attachment of the 5S RNA into the large ribosomal subunit, where it forms part of the central protuberance. In the 70S ribosome it contacts protein S13 of the 30S subunit (bridge B1b), connecting the 2 subunits; this bridge is implicated in subunit movement. Contacts the P site tRNA; the 5S rRNA and some of its associated proteins might help stabilize positioning of ribosome-bound tRNAs. This is Large ribosomal subunit protein uL5 from Nitrosospira multiformis (strain ATCC 25196 / NCIMB 11849 / C 71).